We begin with the raw amino-acid sequence, 1922 residues long: Kinesin-related protein 4 (1922 aa).

Residues 22-343 (KIKVAIRVRP…LQFAKRAKRV (322 aa)) enclose the Kinesin motor domain. 101-108 (GQTSSGKT) is an ATP binding site. Positions 448–538 (QKIKKIKNSE…DDEFKDNLNL (91 aa)) are disordered. Over residues 456 to 468 (SENNISSSSSNSS) the composition is skewed to low complexity. Composition is skewed to acidic residues over residues 469–480 (GEEDDDDKDDEN) and 488–532 (DKDD…DDEF). Residues 562 to 1712 (QVKVKREDLD…ELESTKQKNL (1151 aa)) are a coiled coil. The tract at residues 1887–1922 (TSTDNLTTTSTSLKSKSSSNGENKENQNNNIIIKNN) is disordered.

Belongs to the TRAFAC class myosin-kinesin ATPase superfamily. Kinesin family.

It is found in the cytoplasm. Its subcellular location is the cytoskeleton. Microtubule-associated force-producing protein that plays a role in organelle transport. Its motor activity is directed toward the microtubule's plus end. Cooperates with dynein in organizing spindle assembly during cell division. The chain is Kinesin-related protein 4 (kif4) from Dictyostelium discoideum (Social amoeba).